The following is an 81-amino-acid chain: Photosystem I iron-sulfur center (81 aa).

2 4Fe-4S ferredoxin-type domains span residues 2–31 and 39–68; these read SHSV…MVPW and IASS…IRVY. Residues C11, C14, C17, C21, C48, C51, C54, and C58 each contribute to the [4Fe-4S] cluster site.

As to quaternary structure, the G.violaceus PSI reaction center is composed of one copy each of PsaA,B,C,D,E,F,L,M and Z, and forms trimeric complexes. The cofactor is [4Fe-4S] cluster.

The protein resides in the cell inner membrane. It catalyses the reaction reduced [plastocyanin] + hnu + oxidized [2Fe-2S]-[ferredoxin] = oxidized [plastocyanin] + reduced [2Fe-2S]-[ferredoxin]. Apoprotein for the two 4Fe-4S centers FA and FB of photosystem I (PSI); essential for photochemical activity. FB is the terminal electron acceptor of PSI, donating electrons to ferredoxin. The C-terminus interacts with PsaA/B/D and helps assemble the protein into the PSI complex. Required for binding of PsaD and PsaE to PSI. PSI is a plastocyanin/cytochrome c6-ferredoxin oxidoreductase, converting photonic excitation into a charge separation, which transfers an electron from the donor P700 chlorophyll pair to the spectroscopically characterized acceptors A0, A1, FX, FA and FB in turn. This chain is Photosystem I iron-sulfur center, found in Gloeobacter violaceus (strain ATCC 29082 / PCC 7421).